The sequence spans 193 residues: Potassium-transporting ATPase KdpC subunit (193 aa).

Residues 9–29 form a helical membrane-spanning segment; that stretch reads VLMTVVTTVLLGLVYPLLITG.

It belongs to the KdpC family. In terms of assembly, the system is composed of three essential subunits: KdpA, KdpB and KdpC.

The protein localises to the cell inner membrane. Its function is as follows. Part of the high-affinity ATP-driven potassium transport (or Kdp) system, which catalyzes the hydrolysis of ATP coupled with the electrogenic transport of potassium into the cytoplasm. This subunit acts as a catalytic chaperone that increases the ATP-binding affinity of the ATP-hydrolyzing subunit KdpB by the formation of a transient KdpB/KdpC/ATP ternary complex. The protein is Potassium-transporting ATPase KdpC subunit of Koribacter versatilis (strain Ellin345).